The primary structure comprises 534 residues: MLQQLLITLPTEASTWVKLRHPKAATERVALWEDVTKMFKAEALLSQDADETQGESLESRVTLGSLTAESQELLTFKDVSVDFTQEEWGQLAPAHRNLYREVMLENYGNLVSVGCQLSKPGVISQLEKGEEPWLMERDISGVPSSDLKSKTKTKESALQNDISWEELHCGLMMERFTKGSSMYSTLGRISKCNKLESQQENQRMGKGQIPLMCKKTFTQERGQESNRFEKRINVKSEVMPGPIGLPRKRDRKYDTPGKRSRYNIDLVNHSRSYTKMKTFECNICEKIFKQLIHLTEHMRIHTGEKPFRCKECGKAFSQSSSLIPHQRIHTGEKPYECKECGKTFRHPSSLTQHVRIHTGEKPYECRVCEKAFSQSIGLIQHLRTHVREKPFTCKDCGKAFFQIRHLRQHEIIHTGVKPYICNVCSKTFSHSTYLTQHQRTHTGERPYKCKECGKAFSQRIHLSIHQRVHTGVKPYECSHCGKAFRHDSSFAKHQRIHTGEKPYDCNECGKAFSCSSSLIRHCKTHLRNTFSNVV.

Residues K37 and K40 each participate in a glycyl lysine isopeptide (Lys-Gly) (interchain with G-Cter in SUMO2) cross-link. The KRAB domain maps to 74 to 145 (LTFKDVSVDF…ERDISGVPSS (72 aa)). Glycyl lysine isopeptide (Lys-Gly) (interchain with G-Cter in SUMO2) cross-links involve residues K178 and K235. 9 C2H2-type zinc fingers span residues 279–301 (FECN…MRIH), 307–329 (FRCK…QRIH), 335–357 (YECK…VRIH), 363–385 (YECR…LRTH), 391–413 (FTCK…EIIH), 419–441 (YICN…QRTH), 447–469 (YKCK…QRVH), 475–497 (YECS…QRIH), and 503–525 (YDCN…CKTH).

It belongs to the krueppel C2H2-type zinc-finger protein family.

Its subcellular location is the nucleus. In terms of biological role, may be involved in transcriptional regulation. Essential for Golgi structural integrity. In Homo sapiens (Human), this protein is Zinc finger protein 69 homolog B (ZFP69B).